A 1336-amino-acid polypeptide reads, in one-letter code: SH3 domain and tetratricopeptide repeat-containing protein 1 (1336 aa).

Position 1 is an N-acetylmethionine (Met1). 2 disordered regions span residues 1 to 76 (MENL…PPCQ) and 225 to 266 (TGPR…SEEV). Residues 18–27 (GPVGPSGGGS) show a composition bias toward gly residues. Residues 46 to 61 (AGPEEAKAPVRGDEAP) show a composition bias toward basic and acidic residues. 2 stretches are compositionally biased toward low complexity: residues 62–74 (PARVAGPAAGTPP) and 247–266 (EAAPETDSSPPSPSVSSEEV). The SH3 domain maps to 305 to 368 (MAVGLASALA…RSSLISMQGP (64 aa)). 8 TPR repeats span residues 560–593 (ARLCFLLGRLCSRRLKLSQARVYFEEALGALEGS), 601–634 (VAVYANLASIYRKQKNREKCAQVVPKAMALLLGT), 665–698 (ARACFLLARHHVHLKQPEEALPFLERLLLLHRDS), 786–819 (GPLYTSLAQLYSHHGCHGPAITFMTQAVEASAIA), 863–896 (GVIANMVAVALKRTGRTRQAAESYYRALRVARDL), 946–979 (THVLLQLGHLCTRQGPAQQGKGYYEWALLVAVEM), 1027–1063 (GQLLETISQLYLSLGTERAYKSALDYTKRSLGIFIDL), and 1192–1225 (RVAYHRLAALQHRLGHGELAEHFYLKALSLCNSP). Tyr1248 bears the Phosphotyrosine mark. The TPR 9 repeat unit spans residues 1277–1311 (LKIYTRLATIYHNFLLDREKSLFFYQKARTFATEL).

The protein is SH3 domain and tetratricopeptide repeat-containing protein 1 (SH3TC1) of Homo sapiens (Human).